The sequence spans 184 residues: Protein PLANT CADMIUM RESISTANCE 4 (184 aa).

A compositionally biased stretch (polar residues) spans Met-1–Glu-10. Residues Met-1–Thr-21 form a disordered region. Residues Gly-96 to Phe-116 form a helical membrane-spanning segment.

It belongs to the cornifelin family.

It localises to the membrane. Its function is as follows. May be involved in heavy metals transport. This Arabidopsis thaliana (Mouse-ear cress) protein is Protein PLANT CADMIUM RESISTANCE 4 (PCR4).